We begin with the raw amino-acid sequence, 119 residues long: Large ribosomal subunit protein bL20 (119 aa).

This sequence belongs to the bacterial ribosomal protein bL20 family.

Its function is as follows. Binds directly to 23S ribosomal RNA and is necessary for the in vitro assembly process of the 50S ribosomal subunit. It is not involved in the protein synthesizing functions of that subunit. The protein is Large ribosomal subunit protein bL20 of Afipia carboxidovorans (strain ATCC 49405 / DSM 1227 / KCTC 32145 / OM5) (Oligotropha carboxidovorans).